Here is a 362-residue protein sequence, read N- to C-terminus: Fructose-bisphosphate aldolase (362 aa).

Asp33 provides a ligand contact to dihydroxyacetone phosphate. 2 residues coordinate D-glyceraldehyde 3-phosphate: Ser35 and Thr38. Residue Arg42 coordinates beta-D-fructose 1,6-bisphosphate. Lys106 is a binding site for D-glyceraldehyde 3-phosphate. Lys145 is a binding site for dihydroxyacetone phosphate. Glu188 contributes to the D-glyceraldehyde 3-phosphate binding site. The active-site Proton acceptor is Glu188. Dihydroxyacetone phosphate is bound by residues Lys230, Ser272, and Gly273. The active-site Schiff-base intermediate with dihydroxyacetone phosphate is Lys230. Beta-D-fructose 1,6-bisphosphate contacts are provided by residues 272–274 and Ser300; that span reads SGG. Dihydroxyacetone phosphate is bound by residues Gly302 and Arg303. Position 303 (Arg303) interacts with beta-D-fructose 1,6-bisphosphate.

The protein belongs to the class I fructose-bisphosphate aldolase family. Homotetramer. Interacts with TRAP (via cytoplasmic domain); the interaction prevents substrate binding and thereby inhibits aldolase activity. Interacts with MTRAP (via cytoplasmic domain); MTRAP phosphorylation may increase the binding to FBPA. Interact with RH1 (via cytoplasmic domain). Interacts with RH2b (via cytoplasmic domain). Interacts with RH4 (via cytoplasmic domain). Interacts with AMA1 (via cytoplasmic domain); the interaction is weak, however it may be increased upon AMA1 phosphorylation. Interacts with EBA140 (via cytoplasmic domain); the interaction is weak. Interacts with EBA175 (via cytoplasmic domain); the interaction is weak. Interacts with EBA181 (via cytoplasmic domain); the interaction is weak. Interacts with G-actin and F-actin. May interact with ACT2/actin II; the interaction inhibits FBPA catalytic activity. Interacts with human SLC4A1/band 3 (via N-terminus); the interaction inhibits FBPA catalytic activity.

Its subcellular location is the cytoplasm. The protein localises to the membrane. It is found in the host cell membrane. The catalysed reaction is beta-D-fructose 1,6-bisphosphate = D-glyceraldehyde 3-phosphate + dihydroxyacetone phosphate. It functions in the pathway carbohydrate degradation; glycolysis; D-glyceraldehyde 3-phosphate and glycerone phosphate from D-glucose: step 4/4. Its activity is regulated as follows. The cytoplasmic tail of TRAP and probably other adhesins acts as a competitive inhibitor as the binding sites of the glycolytic substrate fructose 1,6-bisphosphate and TRAP partially overlap. Inhibited by suramin, an antiparasitic drug used to treat Trypanosome-mediated infection. Plays a key role in glycolysis by catalyzing the cleavage of fructose 1,6-bisphosphate into dihydroxyacetone phosphate and glyceraldehyde 3-phosphate. Independently of its catalytic activity, connects the actin filaments, and thus the actomyosin motor, to cell surface adhesins of the thrombospondin-related anonymous protein (TRAP), the erythrocyte binding ligand (EBL) and reticulocyte binding homolog (RH) protein families; this interaction is probably involved in transducing the motor force across the parasite surface required for sporozoite and ookinete gliding motility and merozoite invasion. Stimulates actin polymerisation. In Plasmodium falciparum (isolate K1 / Thailand), this protein is Fructose-bisphosphate aldolase.